Reading from the N-terminus, the 616-residue chain is Hemagglutinin-neuraminidase (616 aa).

The Intravirion segment spans residues Met-1–Arg-26. The helical transmembrane segment at Ile-27–Ser-47 threads the bilayer. The Virion surface segment spans residues Met-48 to Pro-616. Residue Asn-119 is glycosylated (N-linked (GlcNAc...) asparagine; by host). The segment at Gly-124 to Tyr-152 is important for interaction with fusion/F protein. 3 disulfides stabilise this stretch: Cys-172–Cys-196, Cys-186–Cys-247, and Cys-238–Cys-251. Residues Asn-234–Ser-239 form an involved in neuraminidase activity region. N-linked (GlcNAc...) asparagine; by host glycosylation is found at Asn-341 and Asn-433. Intrachain disulfides connect Cys-344/Cys-461 and Cys-455/Cys-465. Residues Asn-481, Asn-538, and Asn-600 are each glycosylated (N-linked (GlcNAc...) asparagine; by host). Residues Cys-531 and Cys-542 are joined by a disulfide bond.

This sequence belongs to the paramyxoviruses hemagglutinin-neuraminidase family. In terms of assembly, homotetramer; composed of disulfide-linked homodimers. Interacts with F protein trimer. Interacts with host CG-1B; this interaction inhibits viral adsorption and replication rather than internalization.

The protein localises to the virion membrane. The protein resides in the host cell membrane. The enzyme catalyses Hydrolysis of alpha-(2-&gt;3)-, alpha-(2-&gt;6)-, alpha-(2-&gt;8)- glycosidic linkages of terminal sialic acid residues in oligosaccharides, glycoproteins, glycolipids, colominic acid and synthetic substrates.. Its function is as follows. Mediates the viral entry into the host cell together with fusion/F protein. Attaches the virus to sialic acid-containing cell receptors and thereby initiates infection. Binding of HN protein to the receptor induces a conformational change that allows the F protein to trigger virion/cell membranes fusion. Neuraminidase activity ensures the efficient spread of the virus by dissociating the mature virions from the neuraminic acid containing glycoproteins. This Newcastle disease virus (strain Chicken/Northern Ireland/Ulster/67) (NDV) protein is Hemagglutinin-neuraminidase (HN).